A 480-amino-acid polypeptide reads, in one-letter code: Outer capsid protein VP5 (480 aa).

The segment at 1 to 48 (MTSKRLGARFPGFLNRIGSGITRAARSDTTKRIPSAAGRAVERVAASE) is involved in membrane permeabilization.

This sequence belongs to the orbivirus VP5 family.

Its subcellular location is the virion. Its function is as follows. VP5 protein is one of the two proteins (with VP2) which constitute the virus particle outer capsid. Acts as a membrane permeabilization protein that mediates release of viral particles from endosomal compartments into the cytoplasm. Permeabilization activity is probably negatively regulated by VP2 and is triggered by endosomal degradation of VP2 and exposure to low pH. In Ixodes (gulls), this protein is Outer capsid protein VP5 (Segment-6).